Consider the following 222-residue polypeptide: Phosphoribosylformylglycinamidine synthase subunit PurQ (222 aa).

One can recognise a Glutamine amidotransferase type-1 domain in the interval 2-222; it reads SVAIVRFPGT…DNLLHIAEMK (221 aa). Cys-86 serves as the catalytic Nucleophile. Residues His-194 and Glu-196 contribute to the active site.

As to quaternary structure, part of the FGAM synthase complex composed of 1 PurL, 1 PurQ and 2 PurS subunits.

The protein localises to the cytoplasm. It carries out the reaction N(2)-formyl-N(1)-(5-phospho-beta-D-ribosyl)glycinamide + L-glutamine + ATP + H2O = 2-formamido-N(1)-(5-O-phospho-beta-D-ribosyl)acetamidine + L-glutamate + ADP + phosphate + H(+). The catalysed reaction is L-glutamine + H2O = L-glutamate + NH4(+). It participates in purine metabolism; IMP biosynthesis via de novo pathway; 5-amino-1-(5-phospho-D-ribosyl)imidazole from N(2)-formyl-N(1)-(5-phospho-D-ribosyl)glycinamide: step 1/2. In terms of biological role, part of the phosphoribosylformylglycinamidine synthase complex involved in the purines biosynthetic pathway. Catalyzes the ATP-dependent conversion of formylglycinamide ribonucleotide (FGAR) and glutamine to yield formylglycinamidine ribonucleotide (FGAM) and glutamate. The FGAM synthase complex is composed of three subunits. PurQ produces an ammonia molecule by converting glutamine to glutamate. PurL transfers the ammonia molecule to FGAR to form FGAM in an ATP-dependent manner. PurS interacts with PurQ and PurL and is thought to assist in the transfer of the ammonia molecule from PurQ to PurL. This is Phosphoribosylformylglycinamidine synthase subunit PurQ from Helicobacter hepaticus (strain ATCC 51449 / 3B1).